Here is a 497-residue protein sequence, read N- to C-terminus: Cytochrome P450 71A14 (497 aa).

Residues 3–23 (MIIISLCLATILALLLLKQFL) form a helical membrane-spanning segment. C440 contacts heme.

It belongs to the cytochrome P450 family. The cofactor is heme.

It localises to the membrane. In Arabidopsis thaliana (Mouse-ear cress), this protein is Cytochrome P450 71A14 (CYP71A14).